The primary structure comprises 260 residues: Acetylglutamate kinase (260 aa).

Residues glycine 45 to glycine 46, arginine 67, and asparagine 159 contribute to the substrate site.

This sequence belongs to the acetylglutamate kinase family. ArgB subfamily.

It localises to the cytoplasm. The enzyme catalyses N-acetyl-L-glutamate + ATP = N-acetyl-L-glutamyl 5-phosphate + ADP. It functions in the pathway amino-acid biosynthesis; L-arginine biosynthesis; N(2)-acetyl-L-ornithine from L-glutamate: step 2/4. Its function is as follows. Catalyzes the ATP-dependent phosphorylation of N-acetyl-L-glutamate. The protein is Acetylglutamate kinase of Colwellia psychrerythraea (strain 34H / ATCC BAA-681) (Vibrio psychroerythus).